The sequence spans 795 residues: Inactive N-acetylated-alpha-linked acidic dipeptidase-like protein 2 (795 aa).

The segment at 1–38 (MGENEASLPNTSLQGKKMAYQKVHADQRAPGHSQYLDN) is disordered. Residues 1–121 (MGENEASLPN…RSAPKSNRCN (121 aa)) are Cytoplasmic-facing. Ser92 is subject to Phosphoserine. A helical; Signal-anchor for type II membrane protein membrane pass occupies residues 122-142 (FCHVLKILCTATILFIFGILI). Over 143 to 795 (GYYVHTNCPS…VFKSVLDGKN (653 aa)) the chain is Extracellular. N-linked (GlcNAc...) asparagine glycans are attached at residues Asn295, Asn373, Asn534, and Asn759.

This sequence belongs to the peptidase M28 family. M28B subfamily. Expressed at higher level in kidney and placenta. In embryo, it is mainly confined to duodenal and stomach endoderm, mesonephros, metanephros and pancreas.

Its subcellular location is the membrane. Functionally, may be catalytically inactive. The chain is Inactive N-acetylated-alpha-linked acidic dipeptidase-like protein 2 (NAALADL2) from Homo sapiens (Human).